We begin with the raw amino-acid sequence, 122 residues long: Small ribosomal subunit protein uS13 (122 aa).

The tract at residues 97–122 (PVRGQRTHTNAKTRKGRSKLPIAGKK) is disordered.

Belongs to the universal ribosomal protein uS13 family. As to quaternary structure, part of the 30S ribosomal subunit. Forms a loose heterodimer with protein S19. Forms two bridges to the 50S subunit in the 70S ribosome.

Its function is as follows. Located at the top of the head of the 30S subunit, it contacts several helices of the 16S rRNA. In the 70S ribosome it contacts the 23S rRNA (bridge B1a) and protein L5 of the 50S subunit (bridge B1b), connecting the 2 subunits; these bridges are implicated in subunit movement. Contacts the tRNAs in the A and P-sites. The protein is Small ribosomal subunit protein uS13 of Wolbachia pipientis subsp. Culex pipiens (strain wPip).